A 199-amino-acid chain; its full sequence is Recombination protein RecR (199 aa).

The C4-type zinc finger occupies 57–72; that stretch reads CQSCRTYTEESLCPIC. The Toprim domain occupies 81 to 176; that stretch reads STICVVETPA…VISRIAHGVP (96 aa).

The protein belongs to the RecR family.

Functionally, may play a role in DNA repair. It seems to be involved in an RecBC-independent recombinational process of DNA repair. It may act with RecF and RecO. In Shewanella sp. (strain ANA-3), this protein is Recombination protein RecR.